The sequence spans 177 residues: Large ribosomal subunit protein uL6 (177 aa).

It belongs to the universal ribosomal protein uL6 family. As to quaternary structure, part of the 50S ribosomal subunit.

Its function is as follows. This protein binds to the 23S rRNA, and is important in its secondary structure. It is located near the subunit interface in the base of the L7/L12 stalk, and near the tRNA binding site of the peptidyltransferase center. The chain is Large ribosomal subunit protein uL6 from Cereibacter sphaeroides (strain ATCC 17029 / ATH 2.4.9) (Rhodobacter sphaeroides).